We begin with the raw amino-acid sequence, 1105 residues long: MSSGGRGGKRRGAPPPGPSGAAAKRAHPGGTPQPPPPAATAAAPVAEEEDMMDEDVFLDETILAEDEEALLLLDRDEALASRLSRWRRPALPADLASGCSRNVAFQQLEIDYVIGESHKVLLPNSSGPAAILRIFGVTREGHSVCCQVHGFEPYFYISCPMGMGPDDISRFHQTLEGRMKDSNRNSNVPRFVKRIELVQKQTIMHYQPQQSQPFLKIVVALPTMVASCRGILERGITIEGLGSKSFLTYESNILFALRFMIDCNIVGGNWIEVPAGKYMKAARIMSYCQLELDCLYSDLVSHAAEGEHSKMAPFRILSFDIECAGRKGHFPEPTHDPVIQIANLVTLQGEGQPFVRNVMTLKSCSPIVGVDVMSFDTERDVLLAWRDFIREVDPDIIIGYNICKFDLPYLIERAEVLKIVEFPILGRIRNSRVRVRDTTFSSRQYGMRESKDVAVEGRVQFDLLQAMQRDYKLSSYSLNSVSAHFLGEQKEDVHHSIISDLQNGNSETRRRLAVYCLKDAYLPQRLLDKLMYIYNYVEMARVTGVPISFLLSRGQSIKVLSQLLRKAKQKNLVIPNIKGQASGQDTFEGATVLEARAGFYEKPIATLDFASLYPSIMMAYNLCYCTLVPPEDARKLNLPPESVNKTPSGETFVKPDVQKGILPEILEELLAARKRAKADLKEAKDPFERAVLDGRQLALKISANSVYGFTGATVGQLPCLEISSSVTSYGRQMIEHTKKLVEDKFTTLGGYEHNAEVIYGDTDSVMVQFGVSTVEDAMKLGREAADYISGTFIKPIKLEFEKIYFPYLLISKKRYAGLYWTNPEKFDKMDTKGIETVRRDNCLLVKNLVTECLHKILVDRDVPGAVQYVKNTISDLLMNRVDLSLLVITKGLTKTGEDYAVKAAHVELAERMRKRDAATAPTVGDRVPYVIIKAAKGAKAYERSEDPIYVLDNNIPIDPQYYLENQISKPLLRIFEPILKNASRELLHGSHTRAVSISTPSNSGIMKFAKKQLTCLGCKAVISGSNQTLCFHCKGREAELYCKTVGNVSELEMLFGRLWTQCQECQGSLHQDVLCTSRDCPIFYRRRKAQKDMAEARVQLQRWDF.

The tract at residues 1 to 46 (MSSGGRGGKRRGAPPPGPSGAAAKRAHPGGTPQPPPPAATAAAPVA) is disordered. The Zn(2+) site is built by cysteine 1015, cysteine 1018, cysteine 1030, and cysteine 1033. The segment at 1015–1033 (CLGCKAVISGSNQTLCFHC) adopts a CysA-type zinc-finger fold. [4Fe-4S] cluster is bound by residues cysteine 1062, cysteine 1065, cysteine 1075, and cysteine 1080. The CysB motif motif lies at 1062–1080 (CQECQGSLHQDVLCTSRDC).

The protein belongs to the DNA polymerase type-B family. Heterodimer with subunits of 125 kDa and 50 kDa. The 125 kDa subunit contains the polymerase active site and most likely the active site for the 3'-5' exonuclease activity. Requires [4Fe-4S] cluster as cofactor.

The protein localises to the nucleus. The enzyme catalyses DNA(n) + a 2'-deoxyribonucleoside 5'-triphosphate = DNA(n+1) + diphosphate. In terms of biological role, this polymerase possesses two enzymatic activities: DNA synthesis (polymerase) and an exonucleolytic activity that degrades single-stranded DNA in the 3'- to 5'-direction. The polypeptide is DNA polymerase delta catalytic subunit (POLD1) (Oryza sativa subsp. japonica (Rice)).